The primary structure comprises 416 residues: Protein PBN1 (416 aa).

The Lumenal segment spans residues 1 to 385 (MVTRHRVTVL…PDTKDYSKIK (385 aa)). Asn24, Asn85, Asn120, Asn212, and Asn365 each carry an N-linked (GlcNAc...) asparagine glycan. The chain crosses the membrane as a helical; Signal-anchor for type III membrane protein span at residues 386–405 (NGTLLCLLISIIYIFSKVFG). Over 406 to 416 (NNKKKRSVKRE) the chain is Cytoplasmic.

The protein belongs to the PIGX family. N-glycosylated.

It is found in the endoplasmic reticulum membrane. It functions in the pathway glycolipid biosynthesis; glycosylphosphatidylinositol-anchor biosynthesis. In terms of biological role, required for proper folding and/or the stability of a subset of proteins in the endoplasmic reticulum. Aids the autocatalytic processing of PRB1. Component of glycosylphosphatidylinositol-mannosyltransferase 1 which transfers the first of the 4 mannoses in the GPI-anchor precursors during GPI-anchor biosynthesis. Probably acts by stabilizing the mannosyltransferase GPI14. This chain is Protein PBN1 (PBN1), found in Saccharomyces cerevisiae (strain ATCC 204508 / S288c) (Baker's yeast).